Reading from the N-terminus, the 395-residue chain is Acetate kinase (395 aa).

Asn-8 serves as a coordination point for Mg(2+). Lys-15 contributes to the ATP binding site. Position 90 (Arg-90) interacts with substrate. Asp-147 acts as the Proton donor/acceptor in catalysis. ATP contacts are provided by residues 207-211 (HLGNG), 284-286 (DMR), and 330-334 (GIGEN). Position 383 (Glu-383) interacts with Mg(2+).

This sequence belongs to the acetokinase family. In terms of assembly, homodimer. The cofactor is Mg(2+). Mn(2+) is required as a cofactor.

It localises to the cytoplasm. The enzyme catalyses acetate + ATP = acetyl phosphate + ADP. Its pathway is metabolic intermediate biosynthesis; acetyl-CoA biosynthesis; acetyl-CoA from acetate: step 1/2. In terms of biological role, catalyzes the formation of acetyl phosphate from acetate and ATP. Can also catalyze the reverse reaction. The chain is Acetate kinase from Enterococcus faecalis (strain ATCC 700802 / V583).